We begin with the raw amino-acid sequence, 306 residues long: Nod factor export ATP-binding protein I (306 aa).

Residues 8–238 (IDLVGVRKSF…HIGCNVIEIY (231 aa)) form the ABC transporter domain. 40–47 (GPNGAGKS) is an ATP binding site.

It belongs to the ABC transporter superfamily. Lipooligosaccharide exporter (TC 3.A.1.102) family. In terms of assembly, the complex is composed of two ATP-binding proteins (NodI) and two transmembrane proteins (NodJ).

It localises to the cell inner membrane. In terms of biological role, part of the ABC transporter complex NodIJ involved in the export of the nodulation factors (Nod factors), the bacterial signal molecules that induce symbiosis and subsequent nodulation induction. Nod factors are LCO (lipo-chitin oligosaccharide), a modified beta-1,4-linked N-acetylglucosamine oligosaccharide. This subunit is responsible for energy coupling to the transport system. The chain is Nod factor export ATP-binding protein I from Bradyrhizobium diazoefficiens (strain JCM 10833 / BCRC 13528 / IAM 13628 / NBRC 14792 / USDA 110).